The sequence spans 783 residues: Cation/H(+) antiporter 10 (783 aa).

12 helical membrane passes run 31-51 (VVFG…FFCI), 61-81 (IGIS…PQLF), 100-120 (IAAL…LMTV), 135-155 (VVIG…QNFF), 175-195 (AIVI…LLEL), 206-226 (ALSA…VASI), 244-264 (AVII…QWVI), 276-295 (MYIH…FVFF), 300-322 (ILGP…ALEA), 356-376 (IFFN…ACLA), 389-409 (LAVS…YEAV), and 418-438 (ATYS…PTVL).

Belongs to the monovalent cation:proton antiporter 2 (CPA2) transporter (TC 2.A.37) family. CHX (TC 2.A.37.4) subfamily. As to expression, specifically expressed in pollen.

The protein localises to the membrane. Functionally, may operate as a cation/H(+) antiporter. The sequence is that of Cation/H(+) antiporter 10 (CHX10) from Arabidopsis thaliana (Mouse-ear cress).